The following is a 288-amino-acid chain: Probable proteasome subunit alpha type-7 (288 aa).

Residue T2 is modified to N-acetylthreonine. Residues 247–288 form a disordered region; the sequence is INGDDDEDEDDSDNVMSSDDENAPVATNANATTDQEGDIHLE. Residues 249–268 are compositionally biased toward acidic residues; sequence GDDDEDEDDSDNVMSSDDEN. Residues 269–279 are compositionally biased toward low complexity; that stretch reads APVATNANATT.

The protein belongs to the peptidase T1A family. The 26S proteasome consists of a 20S proteasome core and two 19S regulatory subunits. The 20S proteasome core is composed of 28 subunits that are arranged in four stacked rings, resulting in a barrel-shaped structure. The two end rings are each formed by seven alpha subunits, and the two central rings are each formed by seven beta subunits. The catalytic chamber with the active sites is on the inside of the barrel. Post-translationally, the alpha and beta forms are probably products of the same gene with different post-translational modifications.

It is found in the cytoplasm. The protein localises to the nucleus. The proteasome degrades poly-ubiquitinated proteins in the cytoplasm and in the nucleus. It is essential for the regulated turnover of proteins and for the removal of misfolded proteins. The proteasome is a multicatalytic proteinase complex that is characterized by its ability to cleave peptides with Arg, Phe, Tyr, Leu, and Glu adjacent to the leaving group at neutral or slightly basic pH. It has an ATP-dependent proteolytic activity. The sequence is that of Probable proteasome subunit alpha type-7 (PRE10) from Saccharomyces cerevisiae (strain ATCC 204508 / S288c) (Baker's yeast).